We begin with the raw amino-acid sequence, 240 residues long: UDP-2,3-diacylglucosamine hydrolase (240 aa).

Mn(2+)-binding residues include D8, H10, D41, N79, and H114. 79–80 (NR) is a substrate binding site. Positions 122, 160, 164, 167, and 195 each coordinate substrate. Residues H195 and H197 each coordinate Mn(2+).

This sequence belongs to the LpxH family. Mn(2+) is required as a cofactor.

The protein resides in the cell inner membrane. The enzyme catalyses UDP-2-N,3-O-bis[(3R)-3-hydroxytetradecanoyl]-alpha-D-glucosamine + H2O = 2-N,3-O-bis[(3R)-3-hydroxytetradecanoyl]-alpha-D-glucosaminyl 1-phosphate + UMP + 2 H(+). The protein operates within glycolipid biosynthesis; lipid IV(A) biosynthesis; lipid IV(A) from (3R)-3-hydroxytetradecanoyl-[acyl-carrier-protein] and UDP-N-acetyl-alpha-D-glucosamine: step 4/6. Hydrolyzes the pyrophosphate bond of UDP-2,3-diacylglucosamine to yield 2,3-diacylglucosamine 1-phosphate (lipid X) and UMP by catalyzing the attack of water at the alpha-P atom. Involved in the biosynthesis of lipid A, a phosphorylated glycolipid that anchors the lipopolysaccharide to the outer membrane of the cell. The sequence is that of UDP-2,3-diacylglucosamine hydrolase from Salmonella paratyphi A (strain ATCC 9150 / SARB42).